The primary structure comprises 293 residues: Small ribosomal subunit biogenesis GTPase RsgA (293 aa).

A CP-type G domain is found at 63–223 (QNELVRPPIA…VADTPGFSAL (161 aa)). GTP-binding positions include 112 to 115 (SKID) and 166 to 174 (GQSGVGKSS). Zn(2+)-binding residues include C247, C252, H254, and C260.

It belongs to the TRAFAC class YlqF/YawG GTPase family. RsgA subfamily. In terms of assembly, monomer. Associates with 30S ribosomal subunit, binds 16S rRNA. The cofactor is Zn(2+).

It localises to the cytoplasm. One of several proteins that assist in the late maturation steps of the functional core of the 30S ribosomal subunit. Helps release RbfA from mature subunits. May play a role in the assembly of ribosomal proteins into the subunit. Circularly permuted GTPase that catalyzes slow GTP hydrolysis, GTPase activity is stimulated by the 30S ribosomal subunit. The protein is Small ribosomal subunit biogenesis GTPase RsgA of Geobacillus kaustophilus (strain HTA426).